Reading from the N-terminus, the 181-residue chain is Akirin-2 (181 aa).

Residues 18 to 48 (SPAASPKRRRCAPLSPSGPSPQKYLRLEPSP) form a disordered region. The short motif at 23–28 (PKRRRC) is the Nuclear localization signal element. An SYVS motif motif is present at residues 178-181 (SYVS).

This sequence belongs to the akirin family. As to quaternary structure, homodimer. Interacts with actl6a/baf53a. Interacts with gmnn.

It is found in the nucleus. Molecular adapter that acts as a bridge between a variety of multiprotein complexes, and which is involved in embryonic development, immunity, myogenesis and brain development. Plays a key role in nuclear protein degradation by promoting import of proteasomes into the nucleus: acts by bridging fully assembled 20S proteasomes with nuclear import receptor ipo9. Involved in both neural precursor maintenance and terminal neural differentiation: bridges gmnn and actl6a/baf53a in neural progenitor cells, antagonizing the activity of gmnn, thereby suppressing sox2 expression. Also required for proper activation of neurod1 and neuronal differentiation. Involved in myogenesis: required for skeletal muscle formation and skeletal development, possibly by regulating expression of muscle differentiation factors. In Xenopus laevis (African clawed frog), this protein is Akirin-2.